We begin with the raw amino-acid sequence, 277 residues long: Undecaprenyl-diphosphatase (277 aa).

5 helical membrane passes run 85 to 105 (VNIV…AGAI), 109 to 129 (LFAP…ILWV), 188 to 208 (ATEF…VYSV), 218 to 238 (ADIP…FLCV), and 256 to 276 (YRIG…VVWA).

The protein belongs to the UppP family.

It localises to the cell inner membrane. The catalysed reaction is di-trans,octa-cis-undecaprenyl diphosphate + H2O = di-trans,octa-cis-undecaprenyl phosphate + phosphate + H(+). In terms of biological role, catalyzes the dephosphorylation of undecaprenyl diphosphate (UPP). Confers resistance to bacitracin. The chain is Undecaprenyl-diphosphatase from Herminiimonas arsenicoxydans.